The following is a 201-amino-acid chain: Small ribosomal subunit protein uS4c (201 aa).

The S4 RNA-binding domain maps to 89–152 (MRLDNILFRL…NSRTLVQNLI (64 aa)).

Belongs to the universal ribosomal protein uS4 family. In terms of assembly, part of the 30S ribosomal subunit. Contacts protein S5. The interaction surface between S4 and S5 is involved in control of translational fidelity.

It is found in the plastid. It localises to the chloroplast. In terms of biological role, one of the primary rRNA binding proteins, it binds directly to 16S rRNA where it nucleates assembly of the body of the 30S subunit. With S5 and S12 plays an important role in translational accuracy. The polypeptide is Small ribosomal subunit protein uS4c (rps4) (Crucihimalaya wallichii (Rock-cress)).